The sequence spans 384 residues: S-adenosylmethionine synthase (384 aa).

H15 contacts ATP. A Mg(2+)-binding site is contributed by D17. Residue E43 coordinates K(+). L-methionine-binding residues include E56 and Q99. A flexible loop region spans residues 99–109 (QSPDINQGVDR). Residues 164 to 166 (DAK), 230 to 231 (RF), D239, 245 to 246 (RK), A262, and K266 each bind ATP. An L-methionine-binding site is contributed by D239. An L-methionine-binding site is contributed by K270.

Belongs to the AdoMet synthase family. In terms of assembly, homotetramer; dimer of dimers. Requires Mg(2+) as cofactor. The cofactor is K(+).

The protein localises to the cytoplasm. It carries out the reaction L-methionine + ATP + H2O = S-adenosyl-L-methionine + phosphate + diphosphate. The protein operates within amino-acid biosynthesis; S-adenosyl-L-methionine biosynthesis; S-adenosyl-L-methionine from L-methionine: step 1/1. Its function is as follows. Catalyzes the formation of S-adenosylmethionine (AdoMet) from methionine and ATP. The overall synthetic reaction is composed of two sequential steps, AdoMet formation and the subsequent tripolyphosphate hydrolysis which occurs prior to release of AdoMet from the enzyme. This Escherichia fergusonii (strain ATCC 35469 / DSM 13698 / CCUG 18766 / IAM 14443 / JCM 21226 / LMG 7866 / NBRC 102419 / NCTC 12128 / CDC 0568-73) protein is S-adenosylmethionine synthase.